We begin with the raw amino-acid sequence, 1362 residues long: DNA-directed RNA polymerase subunit beta'' (1362 aa).

The Zn(2+) site is built by C224, C295, C302, and C305.

Belongs to the RNA polymerase beta' chain family. RpoC2 subfamily. As to quaternary structure, in plastids the minimal PEP RNA polymerase catalytic core is composed of four subunits: alpha, beta, beta', and beta''. When a (nuclear-encoded) sigma factor is associated with the core the holoenzyme is formed, which can initiate transcription. Zn(2+) is required as a cofactor.

Its subcellular location is the plastid. It is found in the chloroplast. It catalyses the reaction RNA(n) + a ribonucleoside 5'-triphosphate = RNA(n+1) + diphosphate. Its function is as follows. DNA-dependent RNA polymerase catalyzes the transcription of DNA into RNA using the four ribonucleoside triphosphates as substrates. This chain is DNA-directed RNA polymerase subunit beta'', found in Helianthus annuus (Common sunflower).